The sequence spans 113 residues: MDIIKQIEQKQMRDDIPDFKTGDSVRVYVKVVEGQRERQQPFEGIVIRKKGSGLRETFTVRRTSFGVGVERTFPVHSPKLGKIEVLRRGKTRRAKLYYLRDLKGKAARVKGIR.

Belongs to the bacterial ribosomal protein bL19 family.

In terms of biological role, this protein is located at the 30S-50S ribosomal subunit interface and may play a role in the structure and function of the aminoacyl-tRNA binding site. The chain is Large ribosomal subunit protein bL19 from Natranaerobius thermophilus (strain ATCC BAA-1301 / DSM 18059 / JW/NM-WN-LF).